Consider the following 287-residue polypeptide: Protease HtpX (287 aa).

Transmembrane regions (helical) follow at residues Ile-4–Ile-24 and Gly-33–Ile-53. His-139 is a binding site for Zn(2+). The active site involves Glu-140. A Zn(2+)-binding site is contributed by His-143. 2 helical membrane-spanning segments follow: residues Leu-154–Ile-174 and Ala-195–Phe-215. Residue Glu-220 coordinates Zn(2+).

It belongs to the peptidase M48B family. Zn(2+) serves as cofactor.

The protein localises to the cell inner membrane. This chain is Protease HtpX, found in Shewanella putrefaciens (strain CN-32 / ATCC BAA-453).